The sequence spans 298 residues: Porphobilinogen deaminase (298 aa).

Cysteine 239 carries the post-translational modification S-(dipyrrolylmethanemethyl)cysteine.

It belongs to the HMBS family. As to quaternary structure, monomer. Requires dipyrromethane as cofactor.

The enzyme catalyses 4 porphobilinogen + H2O = hydroxymethylbilane + 4 NH4(+). It participates in porphyrin-containing compound metabolism; protoporphyrin-IX biosynthesis; coproporphyrinogen-III from 5-aminolevulinate: step 2/4. Its function is as follows. Tetrapolymerization of the monopyrrole PBG into the hydroxymethylbilane pre-uroporphyrinogen in several discrete steps. This Ehrlichia chaffeensis (strain ATCC CRL-10679 / Arkansas) protein is Porphobilinogen deaminase.